A 74-amino-acid polypeptide reads, in one-letter code: Small ribosomal subunit protein bS21 (74 aa).

This sequence belongs to the bacterial ribosomal protein bS21 family.

The protein is Small ribosomal subunit protein bS21 of Coxiella burnetii (strain Dugway 5J108-111).